The chain runs to 231 residues: MKRAVVVFSGGQDSTTCLAQALHQYDEVHCVTFDYGQRHRAEIDVARDLALKLGARAHKVLDVTLLSELAVSSLTRDNIPVPDYEPDADGIPNTFVPGRNILFLTLAAIYAYQVKAEAVITGVCETDFSGYPDCRDEFVKALNHAVTLGMAKDIRFETPLMWIDKAETWALADYWGKLDLVREETLTCYNGIKGDGCGQCAACNLRANGLNHYLADKPAVMAAMKQKTGLK.

F8–L18 lines the ATP pocket. Residues C188, C197, C200, and C203 each coordinate Zn(2+).

The protein belongs to the QueC family. Zn(2+) is required as a cofactor.

It catalyses the reaction 7-carboxy-7-deazaguanine + NH4(+) + ATP = 7-cyano-7-deazaguanine + ADP + phosphate + H2O + H(+). Its pathway is purine metabolism; 7-cyano-7-deazaguanine biosynthesis. Catalyzes the ATP-dependent conversion of 7-carboxy-7-deazaguanine (CDG) to 7-cyano-7-deazaguanine (preQ(0)). In Citrobacter koseri (strain ATCC BAA-895 / CDC 4225-83 / SGSC4696), this protein is 7-cyano-7-deazaguanine synthase.